An 89-amino-acid chain; its full sequence is MTILGSISSIGNVKLISKSNNLSSLSNSSSSLQSMNSIQCGGGCGNGGLLGGVGGLVGGVLVGTGVIVGSVLHGVGSILTGGSNNCGCN.

It belongs to the hssA/B family.

This is HssA/B-like protein 21 (hssl21) from Dictyostelium discoideum (Social amoeba).